Consider the following 289-residue polypeptide: Four and a half LIM domains protein 3 (289 aa).

Ser-2 carries the post-translational modification N-acetylserine. The C4-type zinc-finger motif lies at 7–31 (CAKCNESLYGRKYIQTDSGPYCVPC). 2 LIM zinc-binding domains span residues 40 to 92 (CAEC…CNEC) and 101 to 153 (CSAC…CVPC). Lys-157 is subject to N6-acetyllysine. 2 LIM zinc-binding domains span residues 162–212 (CARC…CVAC) and 221–275 (CSSC…FVPD). Lys-244 is modified (N6-acetyllysine).

In terms of assembly, interacts with SOX15; the interaction recruits FHL3 to FOXK1 promoters where it acts as a transcriptional coactivator of FOXK1. As to expression, expressed in myogenic progenitor cells (at protein level). Expressed in skeletal striated muscle and the heart. Expressed to a lesser extent, in lung, and kidney. Expressed in skin and skeletal muscles such as the masseter, tongue, tibialis anterior and plantar muscles.

The protein localises to the nucleus. It is found in the cytoplasm. In terms of biological role, recruited by SOX15 to FOXK1 promoters where it acts as a transcriptional coactivator of FOXK1. The sequence is that of Four and a half LIM domains protein 3 (Fhl3) from Mus musculus (Mouse).